We begin with the raw amino-acid sequence, 247 residues long: MAARRPGLIALFDVDGTLTAPRKVVTPEMLTFMQELRKVVTVGVVGGSDLIKISEQLGSTVTNDYDYVFSENGLVAHKEGKLIGTQSLKSFLGEEKLKEFINFTLHYIADLDIPIKRGTFIEFRSGMLNVSPIGRNCSQEERDEFEKYDKVHNIRPKMVSVLREKFAHLNLTFSIGGQISFDVFPQGWDKTYCLRYLDGFNEIHFFGDKTYKGGNDHEIYESERTVGHTVTSPDDTVKQCKSLFLEN.

Aspartate 13 serves as the catalytic Nucleophile. Mg(2+) contacts are provided by aspartate 13 and aspartate 15. Residue aspartate 15 is the Proton donor/acceptor of the active site. Alpha-D-mannose 1-phosphate contacts are provided by arginine 22, arginine 124, arginine 135, arginine 142, serine 180, and aspartate 182. Residues aspartate 208, tyrosine 220, and threonine 225 each coordinate Mg(2+).

Belongs to the eukaryotic PMM family. In terms of assembly, homodimer. Mg(2+) serves as cofactor.

Its subcellular location is the cytoplasm. The enzyme catalyses alpha-D-mannose 1-phosphate = D-mannose 6-phosphate. It participates in nucleotide-sugar biosynthesis; GDP-alpha-D-mannose biosynthesis; alpha-D-mannose 1-phosphate from D-fructose 6-phosphate: step 2/2. In terms of biological role, catalyzes the interconversion of mannose-6-phosphate to mannose-1-phosphate, the precursor for the synthesis of GDP-mannose. GDP-mannose is an essential sugar nucleotide for the synthesis of D-mannose-containing cell wall polysaccharides (galactomannans and glucomannans), glycolipids, glycoproteins and the antioxidant L-ascorbate. Can complement the yeast temperature-sensitive mutant sec53-6. This is Phosphomannomutase from Glycine max (Soybean).